Consider the following 310-residue polypeptide: tRNA-cytidine(32) 2-sulfurtransferase (310 aa).

A PP-loop motif motif is present at residues 47-52 (SGGKDS). The [4Fe-4S] cluster site is built by cysteine 122, cysteine 125, and cysteine 213.

It belongs to the TtcA family. Homodimer. It depends on Mg(2+) as a cofactor. The cofactor is [4Fe-4S] cluster.

The protein resides in the cytoplasm. It carries out the reaction cytidine(32) in tRNA + S-sulfanyl-L-cysteinyl-[cysteine desulfurase] + AH2 + ATP = 2-thiocytidine(32) in tRNA + L-cysteinyl-[cysteine desulfurase] + A + AMP + diphosphate + H(+). Its pathway is tRNA modification. In terms of biological role, catalyzes the ATP-dependent 2-thiolation of cytidine in position 32 of tRNA, to form 2-thiocytidine (s(2)C32). The sulfur atoms are provided by the cysteine/cysteine desulfurase (IscS) system. The chain is tRNA-cytidine(32) 2-sulfurtransferase from Cronobacter sakazakii (strain ATCC BAA-894) (Enterobacter sakazakii).